Consider the following 162-residue polypeptide: Shikimate kinase (162 aa).

10–15 is an ATP binding site; it reads GAGKST. S14 serves as a coordination point for Mg(2+). Residues D28, R52, and G73 each coordinate substrate. R113 provides a ligand contact to ATP. R129 serves as a coordination point for substrate.

The protein belongs to the shikimate kinase family. In terms of assembly, monomer. It depends on Mg(2+) as a cofactor.

It localises to the cytoplasm. It catalyses the reaction shikimate + ATP = 3-phosphoshikimate + ADP + H(+). Its pathway is metabolic intermediate biosynthesis; chorismate biosynthesis; chorismate from D-erythrose 4-phosphate and phosphoenolpyruvate: step 5/7. Its function is as follows. Catalyzes the specific phosphorylation of the 3-hydroxyl group of shikimic acid using ATP as a cosubstrate. This Lactococcus lactis subsp. cremoris (strain MG1363) protein is Shikimate kinase.